The following is a 33-amino-acid chain: Unknown 31.6 kDa protein from 2D-PAGE (33 aa).

The protein is Unknown 31.6 kDa protein from 2D-PAGE of Onion yellows phytoplasma.